The chain runs to 413 residues: 2,3-bisphosphoglycerate-independent phosphoglycerate mutase (413 aa).

The protein belongs to the BPG-independent phosphoglycerate mutase family. A-PGAM subfamily.

It carries out the reaction (2R)-2-phosphoglycerate = (2R)-3-phosphoglycerate. The protein operates within carbohydrate degradation; glycolysis; pyruvate from D-glyceraldehyde 3-phosphate: step 3/5. Catalyzes the interconversion of 2-phosphoglycerate and 3-phosphoglycerate. This chain is 2,3-bisphosphoglycerate-independent phosphoglycerate mutase, found in Metallosphaera sedula (strain ATCC 51363 / DSM 5348 / JCM 9185 / NBRC 15509 / TH2).